We begin with the raw amino-acid sequence, 109 residues long: T cell receptor alpha variable 26-1 (109 aa).

An N-terminal signal peptide occupies residues 1 to 19 (MRLVARVTVFLTFGTIIDA). The 90-residue stretch at 20–109 (KTTQPTSMDC…TAVYYCIVRV (90 aa)) folds into the Ig-like domain. A disulfide bond links Cys-39 and Cys-105. Asn-40 and Asn-71 each carry an N-linked (GlcNAc...) asparagine glycan.

In terms of assembly, alpha-beta TR is a heterodimer composed of an alpha and beta chain; disulfide-linked. The alpha-beta TR is associated with the transmembrane signaling CD3 coreceptor proteins to form the TR-CD3 (TcR or TCR). The assembly of alpha-beta TR heterodimers with CD3 occurs in the endoplasmic reticulum where a single alpha-beta TR heterodimer associates with one CD3D-CD3E heterodimer, one CD3G-CD3E heterodimer and one CD247 homodimer forming a stable octameric structure. CD3D-CD3E and CD3G-CD3E heterodimers preferentially associate with TR alpha and TR beta chains, respectively. The association of the CD247 homodimer is the last step of TcR assembly in the endoplasmic reticulum and is required for transport to the cell surface.

The protein resides in the cell membrane. Its function is as follows. V region of the variable domain of T cell receptor (TR) alpha chain that participates in the antigen recognition. Alpha-beta T cell receptors are antigen specific receptors which are essential to the immune response and are present on the cell surface of T lymphocytes. Recognize peptide-major histocompatibility (MH) (pMH) complexes that are displayed by antigen presenting cells (APC), a prerequisite for efficient T cell adaptive immunity against pathogens. Binding of alpha-beta TR to pMH complex initiates TR-CD3 clustering on the cell surface and intracellular activation of LCK that phosphorylates the ITAM motifs of CD3G, CD3D, CD3E and CD247 enabling the recruitment of ZAP70. In turn ZAP70 phosphorylates LAT, which recruits numerous signaling molecules to form the LAT signalosome. The LAT signalosome propagates signal branching to three major signaling pathways, the calcium, the mitogen-activated protein kinase (MAPK) kinase and the nuclear factor NF-kappa-B (NF-kB) pathways, leading to the mobilization of transcription factors that are critical for gene expression and essential for T cell growth and differentiation. The T cell repertoire is generated in the thymus, by V-(D)-J rearrangement. This repertoire is then shaped by intrathymic selection events to generate a peripheral T cell pool of self-MH restricted, non-autoaggressive T cells. Post-thymic interaction of alpha-beta TR with the pMH complexes shapes TR structural and functional avidity. The chain is T cell receptor alpha variable 26-1 from Homo sapiens (Human).